The following is a 564-amino-acid chain: Adenine deaminase (564 aa).

Belongs to the metallo-dependent hydrolases superfamily. Adenine deaminase family. The cofactor is Mn(2+).

It catalyses the reaction adenine + H2O + H(+) = hypoxanthine + NH4(+). The sequence is that of Adenine deaminase from Deinococcus geothermalis (strain DSM 11300 / CIP 105573 / AG-3a).